Consider the following 41-residue polypeptide: Ornatin-A3 (41 aa).

A Cell attachment site motif is present at residues 33 to 35 (RGD).

Belongs to the ornatin family.

Its subcellular location is the secreted. In terms of biological role, potent inhibitor of fibrinogen interaction with platelet receptors expressed on glycoprotein IIb-IIIa complex. May prevent blood from clotting during either feeding and/or storage of ingested blood. The chain is Ornatin-A3 from Placobdella ornata (Turtle leech).